Consider the following 559-residue polypeptide: Dihydroxy-acid dehydratase (559 aa).

Aspartate 78 contributes to the Mg(2+) binding site. A [2Fe-2S] cluster-binding site is contributed by cysteine 119. Mg(2+) is bound by residues aspartate 120 and lysine 121. The residue at position 121 (lysine 121) is an N6-carboxylysine. Cysteine 192 lines the [2Fe-2S] cluster pocket. Glutamate 446 contacts Mg(2+). The active-site Proton acceptor is the serine 472.

It belongs to the IlvD/Edd family. Homodimer. [2Fe-2S] cluster serves as cofactor. It depends on Mg(2+) as a cofactor.

It catalyses the reaction (2R)-2,3-dihydroxy-3-methylbutanoate = 3-methyl-2-oxobutanoate + H2O. The enzyme catalyses (2R,3R)-2,3-dihydroxy-3-methylpentanoate = (S)-3-methyl-2-oxopentanoate + H2O. Its pathway is amino-acid biosynthesis; L-isoleucine biosynthesis; L-isoleucine from 2-oxobutanoate: step 3/4. It participates in amino-acid biosynthesis; L-valine biosynthesis; L-valine from pyruvate: step 3/4. In terms of biological role, functions in the biosynthesis of branched-chain amino acids. Catalyzes the dehydration of (2R,3R)-2,3-dihydroxy-3-methylpentanoate (2,3-dihydroxy-3-methylvalerate) into 2-oxo-3-methylpentanoate (2-oxo-3-methylvalerate) and of (2R)-2,3-dihydroxy-3-methylbutanoate (2,3-dihydroxyisovalerate) into 2-oxo-3-methylbutanoate (2-oxoisovalerate), the penultimate precursor to L-isoleucine and L-valine, respectively. The sequence is that of Dihydroxy-acid dehydratase from Wolinella succinogenes (strain ATCC 29543 / DSM 1740 / CCUG 13145 / JCM 31913 / LMG 7466 / NCTC 11488 / FDC 602W) (Vibrio succinogenes).